A 335-amino-acid chain; its full sequence is Serine protease 42 (335 aa).

Positions 1 to 24 (MASGGGSLGLIVFLLLLQPKPCEA) are cleaved as a signal peptide. An N-linked (GlcNAc...) asparagine glycan is attached at N67. The 237-residue stretch at 79–315 (IMGGVDAEEG…YSKWLIAVVN (237 aa)) folds into the Peptidase S1 domain. Cysteines 104 and 120 form a disulfide. The Charge relay system role is filled by H119. N140 is a glycosylation site (N-linked (GlcNAc...) asparagine). Residue D165 is the Charge relay system of the active site. Residue N176 is glycosylated (N-linked (GlcNAc...) asparagine). Disulfide bonds link C199–C273, C232–C253, and C263–C291. S267 (charge relay system) is an active-site residue.

Belongs to the peptidase S1 family. Testis-specific. Mainly detected in round spermatids at all the eminiferous epithelial stages (at protein level).

Its subcellular location is the cytoplasm. It is found in the cell membrane. In terms of biological role, plays a role in spermatogenesis. Involved in germ cell survival during meiosis. Lacks protease activity in vitro. This Mus musculus (Mouse) protein is Serine protease 42.